The sequence spans 210 residues: FMN-dependent NADH:quinone oxidoreductase 9 (210 aa).

FMN contacts are provided by residues Ser10 and Ser16–Ser18.

Belongs to the azoreductase type 1 family. Homodimer. FMN serves as cofactor.

It carries out the reaction 2 a quinone + NADH + H(+) = 2 a 1,4-benzosemiquinone + NAD(+). It catalyses the reaction N,N-dimethyl-1,4-phenylenediamine + anthranilate + 2 NAD(+) = 2-(4-dimethylaminophenyl)diazenylbenzoate + 2 NADH + 2 H(+). Quinone reductase that provides resistance to thiol-specific stress caused by electrophilic quinones. In terms of biological role, also exhibits azoreductase activity. Catalyzes the reductive cleavage of the azo bond in aromatic azo compounds to the corresponding amines. In Burkholderia lata (strain ATCC 17760 / DSM 23089 / LMG 22485 / NCIMB 9086 / R18194 / 383), this protein is FMN-dependent NADH:quinone oxidoreductase 9.